The following is a 387-amino-acid chain: N-acetylglucosamine-6-phosphate deacetylase (387 aa).

The a divalent metal cation site is built by histidine 62, histidine 64, and glutamate 132. A substrate-binding site is contributed by 143-144 (AQ). Residues histidine 198 and histidine 219 each coordinate a divalent metal cation. Substrate-binding positions include 222–223 (NQ), arginine 230, and 251–254 (DFIH). Aspartate 277 is an a divalent metal cation binding site. Aspartate 277 serves as the catalytic Proton donor/acceptor. Position 310–312 (310–312 (LAG)) interacts with substrate.

It belongs to the metallo-dependent hydrolases superfamily. NagA family. Homodimer. It depends on a divalent metal cation as a cofactor.

It carries out the reaction N-acetyl-D-glucosamine 6-phosphate + H2O = D-glucosamine 6-phosphate + acetate. Its pathway is amino-sugar metabolism; N-acetylneuraminate degradation; D-fructose 6-phosphate from N-acetylneuraminate: step 4/5. Its function is as follows. Involved in the first committed step in the biosynthesis of amino-sugar-nucleotides. Catalyzes the hydrolysis of the N-acetyl group of N-acetylglucosamine-6-phosphate (GlcNAc-6-P) to yield glucosamine 6-phosphate and acetate. The sequence is that of N-acetylglucosamine-6-phosphate deacetylase (nagA) from Lysinibacillus sphaericus (Bacillus sphaericus).